Here is a 662-residue protein sequence, read N- to C-terminus: Intracellular exo-alpha-(1-&gt;5)-L-arabinofuranosidase (662 aa).

Glu-27, Asn-72, and Asn-174 together coordinate alpha-L-arabinofuranose. Residue Glu-175 is the Proton donor/acceptor of the active site. Tyr-246, Glu-294, and Gln-352 together coordinate alpha-L-arabinofuranose. The active-site Nucleophile is the Glu-294. Disordered stretches follow at residues 454 to 483, 497 to 548, and 588 to 662; these read LADADPDARNTLAEPERVVPHPVDGTSLRD, SIRC…RTAR, and WTRW…ARRC. Residues 519-533 are compositionally biased toward low complexity; the sequence is TGTPPAAPPSSSSAP. Over residues 537–547 the composition is skewed to basic and acidic residues; that stretch reads PTARRSPDRTA. Low complexity-rich tracts occupy residues 590–603, 628–641, and 649–662; these read RWAPAPRSGSPSRR, RRSPPGSAPGTPAP, and AGASRGAPRTARRC.

The protein belongs to the glycosyl hydrolase 51 family. In terms of assembly, homohexamer; trimer of dimers.

It localises to the cytoplasm. It carries out the reaction Hydrolysis of terminal non-reducing alpha-L-arabinofuranoside residues in alpha-L-arabinosides.. It functions in the pathway glycan metabolism; L-arabinan degradation. Its function is as follows. Involved in the degradation of arabinan and is a key enzyme in the complete degradation of the plant cell wall. Catalyzes the cleavage of terminal alpha-(1-&gt;5)-arabinofuranosyl bonds in different hemicellulosic homopolysaccharides (arabino-oligoxylosides, branched and debranched arabinans). It acts rapidly on the short-chain arabino-oligoxylosides from digestion of xylan with xylanases. It hydrolyzes slowly arabinan and arabinoxylan from wheat and rye flour. The sequence is that of Intracellular exo-alpha-(1-&gt;5)-L-arabinofuranosidase from Streptomyces lividans.